The chain runs to 199 residues: uncharacterized protein (199 aa).

The next 4 helical transmembrane spans lie at 35–55, 57–77, 94–114, and 131–151; these read CELA…IFYD, FVIF…YLEF, LSAA…IFFG, and YYGC…ASFA.

It is found in the membrane. This is an uncharacterized protein from Caenorhabditis elegans.